A 315-amino-acid chain; its full sequence is MKVLLLTGLGALFFAYYWDDNFDPASLQGARVLLTGANAGVGEELAYHYARLGSHLVLTAHTEALLQKVVGNCRKLGAPKVFYIAADMASPEAPESVVQFALDKLGGLDYLVLNHIGGAPAGTRARSPQATRWLMQVNFVSYVQLTSRALPSLTDSKGSLVVVSSLLGRVPTSFSTPYSAAKFALDGFFGSLRRELDVQDVNVAITMCVLGLRDRASAAEAVRSSTSRPRQPEHRGVPLQSQTAMFLPPTVPGARTLTETPLRGWPQPKMKSSRQKSKTEKNDGHLEPVTAWEVQVPRVRRLCRGLARPHLFGHD.

Residues 1–15 form the signal peptide; that stretch reads MKVLLLTGLGALFFA. NADP(+) is bound by residues 36-62, 87-88, and 114-116; these read GANAGVGEELAYHYARLGSHLVLTAHT, DM, and NHI. Serine 165 contacts substrate. Residue tyrosine 178 is the Proton acceptor of the active site. NADP(+) is bound by residues 178–182 and 211–217; these read YSAAK and GLRDRAS. The interval 221 to 286 is disordered; that stretch reads AVRSSTSRPR…SKTEKNDGHL (66 aa). Over residues 277 to 286 the composition is skewed to basic and acidic residues; it reads SKTEKNDGHL.

Belongs to the short-chain dehydrogenases/reductases (SDR) family. Highly expressed in the brain.

It localises to the secreted. The catalysed reaction is cortisone + NADPH + H(+) = cortisol + NADP(+). Its function is as follows. Unidirectional NADP(+)-dependent cortisol dehydrogenase (in vitro). In Homo sapiens (Human), this protein is Hydroxysteroid 11-beta-dehydrogenase 1-like protein (HSD11B1L).